The primary structure comprises 493 residues: Cobyric acid synthase (493 aa).

The GATase cobBQ-type domain occupies 246 to 440 (PIDIAVIKMP…IHGVFDGVAF (195 aa)). Cysteine 326 serves as the catalytic Nucleophile. Histidine 432 is an active-site residue.

The protein belongs to the CobB/CobQ family. CobQ subfamily.

The protein operates within cofactor biosynthesis; adenosylcobalamin biosynthesis. In terms of biological role, catalyzes amidations at positions B, D, E, and G on adenosylcobyrinic A,C-diamide. NH(2) groups are provided by glutamine, and one molecule of ATP is hydrogenolyzed for each amidation. The sequence is that of Cobyric acid synthase from Clostridium botulinum (strain Loch Maree / Type A3).